The chain runs to 89 residues: Acylphosphatase (89 aa).

The Acylphosphatase-like domain maps to 3-89 (ALFIKISGRV…QNFTSFDIVP (87 aa)). Active-site residues include Arg18 and Asn36.

This sequence belongs to the acylphosphatase family.

It catalyses the reaction an acyl phosphate + H2O = a carboxylate + phosphate + H(+). The chain is Acylphosphatase (acyP) from Pseudothermotoga lettingae (strain ATCC BAA-301 / DSM 14385 / NBRC 107922 / TMO) (Thermotoga lettingae).